Reading from the N-terminus, the 603-residue chain is Probable NOT transcription complex subunit VIP2 (603 aa).

Polar residues-rich tracts occupy residues 1–28 and 36–70; these read MQGT…NNLS and NLPS…PGYS. 4 disordered regions span residues 1 to 70, 212 to 242, 306 to 335, and 355 to 377; these read MQGT…PGYS, NDGS…LGSL, AGFN…GGVS, and SSHS…PLNS. Positions 312-335 are enriched in polar residues; it reads GTYSSNRPQQQLQHAPSVSSGGVS.

The protein belongs to the CNOT2/3/5 family. In terms of assembly, binds to VIP1. Interacts with Agrobacterium tumefaciens VirE2. Forms a complex made of Agrobacterium VirE2, VIP1, VIP2 and single-stranded DNA (ssDNA).

The protein resides in the nucleus. Its function is as follows. Transcriptional regulator required for Agrobacterium-mediated stable genetic transformation by T-DNA integration in host genome, but not for T-DNA transient expression. In Nicotiana benthamiana, this protein is Probable NOT transcription complex subunit VIP2 (VIP2).